Here is a 213-residue protein sequence, read N- to C-terminus: NAD(P)H-hydrate epimerase (213 aa).

The YjeF N-terminal domain occupies 8–210 (MYNIEENGHA…KIGIPPEAEK (203 aa)). Residue 55–59 (NNGGD) coordinates (6S)-NADPHX. The K(+) site is built by Asn-56 and Asp-122. Residues 126–132 (GTGITGE), Tyr-137, and Asp-155 each bind (6S)-NADPHX. Ser-158 provides a ligand contact to K(+).

This sequence belongs to the NnrE/AIBP family. It depends on K(+) as a cofactor.

The catalysed reaction is (6R)-NADHX = (6S)-NADHX. It carries out the reaction (6R)-NADPHX = (6S)-NADPHX. Functionally, catalyzes the epimerization of the S- and R-forms of NAD(P)HX, a damaged form of NAD(P)H that is a result of enzymatic or heat-dependent hydration. This is a prerequisite for the S-specific NAD(P)H-hydrate dehydratase to allow the repair of both epimers of NAD(P)HX. This chain is NAD(P)H-hydrate epimerase, found in Cenarchaeum symbiosum (strain A).